Consider the following 390-residue polypeptide: Probable purine permease 10 (390 aa).

10 helical membrane-spanning segments follow: residues 44-64, 78-98, 117-137, 140-160, 169-189, 204-224, 241-261, 287-307, 312-332, and 336-356; these read WLRV…ATIL, LATV…ILSF, VLVY…YSIG, YLPV…NAFF, LTPI…LLAF, YVKG…VLSL, VMDM…VGLF, LVWT…LIFE, FSNA…VIIF, and MNGL…SYVY. A disordered region spans residues 370–390; the sequence is EITTTESPDPPEAEESTWQSK.

This sequence belongs to the purine permeases (TC 2.A.7.14) family.

It is found in the membrane. This is Probable purine permease 10 (PUP10) from Arabidopsis thaliana (Mouse-ear cress).